A 485-amino-acid polypeptide reads, in one-letter code: Telomeric DNA-binding factor trf1 (485 aa).

Positions 1–20 (MSKRSLDPSDDFKGQKRLAI) are enriched in basic and acidic residues. The interval 1-23 (MSKRSLDPSDDFKGQKRLAIDPE) is disordered. In terms of domain architecture, HTH myb-type spans 400–457 (RRVANRRSWTKEEEEALLDGLDLVKGPRWSQILELYGPGGKKSEVLKYRNQVQLKDKA). The H-T-H motif DNA-binding region spans 428–453 (WSQILELYGPGGKKSEVLKYRNQVQL).

Homodimer.

The protein localises to the nucleus. Its function is as follows. Binds the telomeric double-stranded TTACAGG repeat and regulates telomere length. The protein is Telomeric DNA-binding factor trf1 (trf1) of Schizosaccharomyces pombe (strain 972 / ATCC 24843) (Fission yeast).